Reading from the N-terminus, the 131-residue chain is NADPH-dependent 7-cyano-7-deazaguanine reductase (131 aa).

Catalysis depends on Cys47, which acts as the Thioimide intermediate. Asp54 (proton donor) is an active-site residue. Substrate contacts are provided by residues 69 to 71 (MEL) and 88 to 89 (HE).

It belongs to the GTP cyclohydrolase I family. QueF type 1 subfamily.

Its subcellular location is the cytoplasm. It catalyses the reaction 7-aminomethyl-7-carbaguanine + 2 NADP(+) = 7-cyano-7-deazaguanine + 2 NADPH + 3 H(+). The protein operates within tRNA modification; tRNA-queuosine biosynthesis. Catalyzes the NADPH-dependent reduction of 7-cyano-7-deazaguanine (preQ0) to 7-aminomethyl-7-deazaguanine (preQ1). In Microcystis aeruginosa (strain NIES-843 / IAM M-2473), this protein is NADPH-dependent 7-cyano-7-deazaguanine reductase.